The sequence spans 524 residues: Chromosomal replication initiator protein DnaA (524 aa).

The domain I, interacts with DnaA modulators stretch occupies residues 1-72 (MNDFWQHCSA…DLARDFWNAP (72 aa)). The tract at residues 72 to 187 (PIEVQFVLDP…GEADSMYERS (116 aa)) is domain II. Residues 188-404 (KLNPVLTFDN…GALRKILAYS (217 aa)) form a domain III, AAA+ region region. ATP-binding residues include Gly232, Gly234, Lys235, and Thr236. Residues 405–524 (KFHGREISIE…LHVLEQTLKG (120 aa)) form a domain IV, binds dsDNA region.

This sequence belongs to the DnaA family. Oligomerizes as a right-handed, spiral filament on DNA at oriC.

It localises to the cytoplasm. Functionally, plays an essential role in the initiation and regulation of chromosomal replication. ATP-DnaA binds to the origin of replication (oriC) to initiate formation of the DNA replication initiation complex once per cell cycle. Binds the DnaA box (a 9 base pair repeat at the origin) and separates the double-stranded (ds)DNA. Forms a right-handed helical filament on oriC DNA; dsDNA binds to the exterior of the filament while single-stranded (ss)DNA is stabiized in the filament's interior. The ATP-DnaA-oriC complex binds and stabilizes one strand of the AT-rich DNA unwinding element (DUE), permitting loading of DNA polymerase. After initiation quickly degrades to an ADP-DnaA complex that is not apt for DNA replication. Binds acidic phospholipids. The polypeptide is Chromosomal replication initiator protein DnaA (Burkholderia multivorans (strain ATCC 17616 / 249)).